The following is a 294-amino-acid chain: NAD kinase (294 aa).

Catalysis depends on Asp74, which acts as the Proton acceptor. NAD(+) is bound by residues 74–75 (DG), 148–149 (NE), His159, Arg176, Asp178, and 189–194 (TAYSLS).

It belongs to the NAD kinase family. It depends on a divalent metal cation as a cofactor.

The protein resides in the cytoplasm. The catalysed reaction is NAD(+) + ATP = ADP + NADP(+) + H(+). In terms of biological role, involved in the regulation of the intracellular balance of NAD and NADP, and is a key enzyme in the biosynthesis of NADP. Catalyzes specifically the phosphorylation on 2'-hydroxyl of the adenosine moiety of NAD to yield NADP. This chain is NAD kinase, found in Pseudoalteromonas translucida (strain TAC 125).